Here is a 256-residue protein sequence, read N- to C-terminus: Alcohol dehydrogenase (256 aa).

12–35 (FVAGLGGIGLDTSKELVKRDLKNL) is an NAD(+) binding site. Serine 140 is a substrate binding site. Residue tyrosine 153 is the Proton acceptor of the active site.

Belongs to the short-chain dehydrogenases/reductases (SDR) family. Homodimer.

The catalysed reaction is a primary alcohol + NAD(+) = an aldehyde + NADH + H(+). It catalyses the reaction a secondary alcohol + NAD(+) = a ketone + NADH + H(+). This chain is Alcohol dehydrogenase (Adh), found in Drosophila orena (Fruit fly).